Reading from the N-terminus, the 205-residue chain is Ribosomal RNA large subunit methyltransferase E (205 aa).

Positions 60, 62, 80, 96, and 121 each coordinate S-adenosyl-L-methionine. The active-site Proton acceptor is the Lys161.

This sequence belongs to the class I-like SAM-binding methyltransferase superfamily. RNA methyltransferase RlmE family.

The protein localises to the cytoplasm. The enzyme catalyses uridine(2552) in 23S rRNA + S-adenosyl-L-methionine = 2'-O-methyluridine(2552) in 23S rRNA + S-adenosyl-L-homocysteine + H(+). In terms of biological role, specifically methylates the uridine in position 2552 of 23S rRNA at the 2'-O position of the ribose in the fully assembled 50S ribosomal subunit. The protein is Ribosomal RNA large subunit methyltransferase E of Azoarcus sp. (strain BH72).